The primary structure comprises 654 residues: Import motor subunit, mitochondrial (654 aa).

A mitochondrion-targeting transit peptide spans 1 to 23 (MLAAKNILNRSSLSSSFRIATRL). A Phosphothreonine modification is found at Thr-330. Residues 629–654 (EQLYKNDSNNNNNNNGNNAESGETKQ) form a disordered region. Low complexity predominate over residues 637–646 (NNNNNNNGNN).

It belongs to the heat shock protein 70 family. As to quaternary structure, component of the PAM complex, at least composed of SSC1 (mtHsp70), MGE1, TIM44, PAM16/TIM16, PAM17 and PAM18/TIM14. In the complex, SSC1 interacts directly with PAM18 and TIM44. Interacts with NAP1.

Its subcellular location is the mitochondrion matrix. The enzyme catalyses ATP + H2O = ADP + phosphate + H(+). In terms of biological role, essential component of the PAM complex, a complex required for the translocation of transit peptide-containing proteins from the inner membrane into the mitochondrial matrix in an ATP-dependent manner. Constitutes the ATP-driven core of the motor and binds the precursor preprotein. Required for the import of the processed frataxin homolog YFH1 into the mitochondrion. The protein is Import motor subunit, mitochondrial of Saccharomyces cerevisiae (strain ATCC 204508 / S288c) (Baker's yeast).